The primary structure comprises 220 residues: Ribosomal RNA small subunit methyltransferase J (220 aa).

Residues 55–56, 71–72, and D123 contribute to the S-adenosyl-L-methionine site; these read RD and ER.

The protein belongs to the methyltransferase superfamily. RsmJ family.

The protein localises to the cytoplasm. The catalysed reaction is guanosine(1516) in 16S rRNA + S-adenosyl-L-methionine = N(2)-methylguanosine(1516) in 16S rRNA + S-adenosyl-L-homocysteine + H(+). In terms of biological role, specifically methylates the guanosine in position 1516 of 16S rRNA. This Rhodopseudomonas palustris (strain BisB5) protein is Ribosomal RNA small subunit methyltransferase J.